The following is a 685-amino-acid chain: Sodium/glucose cotransporter 4 (685 aa).

The interval M1–E20 is disordered. At M1–Y32 the chain is on the extracellular side. Residues D33–I53 form a helical membrane-spanning segment. The Cytoplasmic portion of the chain corresponds to R54–T71. Residues W72–G94 form a helical membrane-spanning segment. At T95–A110 the chain is on the extracellular side. The helical transmembrane segment at T111 to V131 threads the bilayer. The Cytoplasmic segment spans residues T132 to L153. The helical transmembrane segment at S154 to I174 threads the bilayer. Residues Q175 to T186 are Extracellular-facing. The helical transmembrane segment at V187–Y207 threads the bilayer. Residues T208–T213 are Cytoplasmic-facing. Residues V214–Y234 form a helical membrane-spanning segment. Residues P235–N271 are Extracellular-facing. N-linked (GlcNAc...) asparagine glycosylation occurs at N247. Residues G272 to C292 form a helical membrane-spanning segment. At T293–G313 the chain is on the cytoplasmic side. Residues S314 to I334 form a helical membrane-spanning segment. Over S335–R379 the chain is Extracellular. Residues G380–S402 form a helical membrane-spanning segment. The Cytoplasmic portion of the chain corresponds to T403–M423. The chain crosses the membrane as a helical span at residues V424–I444. At Q445 to Y455 the chain is on the extracellular side. Residues I456–F476 traverse the membrane as a helical segment. Residues C477–P483 are Cytoplasmic-facing. The helical transmembrane segment at G484–F504 threads the bilayer. Residues S505–Y526 are Extracellular-facing. The helical transmembrane segment at L527–F547 threads the bilayer. At T548–R664 the chain is on the cytoplasmic side. The segment at V577–G616 is disordered. A helical membrane pass occupies residues V665–A685.

This sequence belongs to the sodium:solute symporter (SSF) (TC 2.A.21) family.

It localises to the cell membrane. The enzyme catalyses D-mannose(out) + n Na(+)(out) = D-mannose(in) + n Na(+)(in). Functionally, electrogenic Na(+)-coupled sugar symporter that may play a primary role in D-mannose and possibly D-fructose and D-glucose transport at the plasma membrane. Transporter activity is driven by a transmembrane Na(+) electrochemical gradient set by the Na(+)/K(+) pump. Exclusively recognizes sugar substrates having a pyranose ring with an axial hydroxyl group on carbon 2. The sequence is that of Sodium/glucose cotransporter 4 (Slc5a9) from Mus musculus (Mouse).